Consider the following 57-residue polypeptide: Large ribosomal subunit protein bL32 (57 aa).

Over residues 1–20 (MAVPKKKTSKGKRNQRHAVW) the composition is skewed to basic residues. The segment at 1–23 (MAVPKKKTSKGKRNQRHAVWKAK) is disordered.

The protein belongs to the bacterial ribosomal protein bL32 family.

The chain is Large ribosomal subunit protein bL32 from Prochlorococcus marinus (strain SARG / CCMP1375 / SS120).